Reading from the N-terminus, the 233-residue chain is 5'-methylthioadenosine/S-adenosylhomocysteine nucleosidase (233 aa).

Residue glutamate 12 is the Proton acceptor of the active site. Substrate contacts are provided by residues glycine 78, isoleucine 152, and methionine 173 to glutamate 174. Aspartate 197 serves as the catalytic Proton donor.

It belongs to the PNP/UDP phosphorylase family. MtnN subfamily. In terms of assembly, homodimer.

The catalysed reaction is S-adenosyl-L-homocysteine + H2O = S-(5-deoxy-D-ribos-5-yl)-L-homocysteine + adenine. The enzyme catalyses S-methyl-5'-thioadenosine + H2O = 5-(methylsulfanyl)-D-ribose + adenine. It catalyses the reaction 5'-deoxyadenosine + H2O = 5-deoxy-D-ribose + adenine. It functions in the pathway amino-acid biosynthesis; L-methionine biosynthesis via salvage pathway; S-methyl-5-thio-alpha-D-ribose 1-phosphate from S-methyl-5'-thioadenosine (hydrolase route): step 1/2. Its function is as follows. Catalyzes the irreversible cleavage of the glycosidic bond in both 5'-methylthioadenosine (MTA) and S-adenosylhomocysteine (SAH/AdoHcy) to adenine and the corresponding thioribose, 5'-methylthioribose and S-ribosylhomocysteine, respectively. Also cleaves 5'-deoxyadenosine, a toxic by-product of radical S-adenosylmethionine (SAM) enzymes, into 5-deoxyribose and adenine. Thus, is required for in vivo function of the radical SAM enzymes biotin synthase and lipoic acid synthase, that are inhibited by 5'-deoxyadenosine accumulation. In Sodalis glossinidius (strain morsitans), this protein is 5'-methylthioadenosine/S-adenosylhomocysteine nucleosidase.